The following is a 79-amino-acid chain: MHHVRQLMMPICPMALNSTTSSSTTFGAFRIMTLNVEEWATAWKVLILLEAAVEEEKRSEEKRILVCGTCGTRSSQKNL.

This is an uncharacterized protein from Homo sapiens (Human).